A 463-amino-acid chain; its full sequence is Chaperone SurA (463 aa).

An N-terminal signal peptide occupies residues 1-25 (MTKPFSVVLASLLAITSTISPLASA). PpiC domains follow at residues 174-276 (GSKY…KLME) and 289-388 (VTEY…QRVG). Disordered stretches follow at residues 329–348 (ATAKESSEDTNSRGQGGDLG) and 434–463 (GDRADNNATAAPAKSADPALPAPPPAKPTR). Over residues 439 to 452 (NNATAAPAKSADPA) the composition is skewed to low complexity. The segment covering 453-463 (LPAPPPAKPTR) has biased composition (pro residues).

It localises to the periplasm. The enzyme catalyses [protein]-peptidylproline (omega=180) = [protein]-peptidylproline (omega=0). Its function is as follows. Chaperone involved in the correct folding and assembly of outer membrane proteins. Recognizes specific patterns of aromatic residues and the orientation of their side chains, which are found more frequently in integral outer membrane proteins. May act in both early periplasmic and late outer membrane-associated steps of protein maturation. This chain is Chaperone SurA, found in Xanthomonas oryzae pv. oryzae (strain KACC10331 / KXO85).